Here is a 115-residue protein sequence, read N- to C-terminus: Potassium-transporting ATPase potassium-binding subunit (115 aa).

The next 2 membrane-spanning stretches (helical) occupy residues 8 to 28 (YFLLLIVIAVPLGKYLYVAFF) and 60 to 80 (SYCTALLIVNAALLGISYGLL).

Belongs to the KdpA family. As to quaternary structure, the system is composed of three essential subunits: KdpA, KdpB and KdpC.

The protein localises to the cell membrane. Functionally, part of the high-affinity ATP-driven potassium transport (or Kdp) system, which catalyzes the hydrolysis of ATP coupled with the electrogenic transport of potassium into the cytoplasm. This subunit binds the extracellular potassium ions and delivers the ions to the membrane domain of KdpB through an intramembrane tunnel. The polypeptide is Potassium-transporting ATPase potassium-binding subunit (Geobacillus stearothermophilus (Bacillus stearothermophilus)).